The primary structure comprises 596 residues: Actin-histidine N-methyltransferase (596 aa).

Residues Arg-75, 104-106, Arg-254, 275-279, and 325-327 each bind S-adenosyl-L-methionine; these read EGY, DMCNH, and NGF. An SET domain is found at 94–314; sequence DGFEISNFAD…EGEQIYIFYG (221 aa). A disordered region spans residues 556-596; it reads QCKDLNGTQEDPPGGGAVVKEIEKHDPSAKRTEGEPKDAGK. Positions 575-596 are enriched in basic and acidic residues; sequence KEIEKHDPSAKRTEGEPKDAGK.

Belongs to the class V-like SAM-binding methyltransferase superfamily. SETD3 actin-histidine methyltransferase family.

It localises to the cytoplasm. The catalysed reaction is L-histidyl-[protein] + S-adenosyl-L-methionine = N(tele)-methyl-L-histidyl-[protein] + S-adenosyl-L-homocysteine + H(+). Functionally, protein-histidine N-methyltransferase that specifically mediates 3-methylhistidine (tele-methylhistidine) methylation of actin at 'His-73'. Does not have protein-lysine N-methyltransferase activity and probably only catalyzes histidine methylation of actin. In Danio rerio (Zebrafish), this protein is Actin-histidine N-methyltransferase.